We begin with the raw amino-acid sequence, 433 residues long: 4-hydroxy-3-methylbut-2-en-1-yl diphosphate synthase (flavodoxin) (433 aa).

[4Fe-4S] cluster-binding residues include Cys-320, Cys-323, Cys-366, and Glu-373.

Belongs to the IspG family. Requires [4Fe-4S] cluster as cofactor.

It catalyses the reaction (2E)-4-hydroxy-3-methylbut-2-enyl diphosphate + oxidized [flavodoxin] + H2O + 2 H(+) = 2-C-methyl-D-erythritol 2,4-cyclic diphosphate + reduced [flavodoxin]. It participates in isoprenoid biosynthesis; isopentenyl diphosphate biosynthesis via DXP pathway; isopentenyl diphosphate from 1-deoxy-D-xylulose 5-phosphate: step 5/6. Its function is as follows. Converts 2C-methyl-D-erythritol 2,4-cyclodiphosphate (ME-2,4cPP) into 1-hydroxy-2-methyl-2-(E)-butenyl 4-diphosphate. In Beijerinckia indica subsp. indica (strain ATCC 9039 / DSM 1715 / NCIMB 8712), this protein is 4-hydroxy-3-methylbut-2-en-1-yl diphosphate synthase (flavodoxin).